We begin with the raw amino-acid sequence, 334 residues long: Ferrochelatase (334 aa).

2 residues coordinate Fe cation: His207 and Glu288.

The protein belongs to the ferrochelatase family.

The protein resides in the cytoplasm. The catalysed reaction is heme b + 2 H(+) = protoporphyrin IX + Fe(2+). It functions in the pathway porphyrin-containing compound metabolism; protoheme biosynthesis; protoheme from protoporphyrin-IX: step 1/1. In terms of biological role, catalyzes the ferrous insertion into protoporphyrin IX. This Helicobacter pylori (strain ATCC 700392 / 26695) (Campylobacter pylori) protein is Ferrochelatase.